Consider the following 63-residue polypeptide: Large ribosomal subunit protein uL29 (63 aa).

Belongs to the universal ribosomal protein uL29 family.

This is Large ribosomal subunit protein uL29 from Vibrio cholerae serotype O1 (strain ATCC 39541 / Classical Ogawa 395 / O395).